A 386-amino-acid polypeptide reads, in one-letter code: EARP and GARP complex-interacting protein 1 (386 aa).

The residue at position 1 (M1) is an N-acetylmethionine. WD repeat units follow at residues 132–172, 182–222, 226–266, and 270–310; these read GAQG…SQAV, RGQL…QIYC, AHGQ…EPVK, and EHSH…SEPF. The interval 312–332 is disordered; that stretch reads HLVDDDDVSDPEEHHTEKSKE. S320 carries the phosphoserine modification. Residues 322–332 show a composition bias toward basic and acidic residues; sequence PEEHHTEKSKE. A WD 5 repeat occupies 344–384; it reads EHEDSVYAVDWASADPWLFASLSYDGRLVINRVPRALKYHI.

The protein belongs to the WD repeat EIPR1 family. In terms of assembly, interacts with two multisubunit tethering complexes: EARP composed of VPS50, VPS51, VPS52 and VPS53 subunits and GARP complex composed of VPS51, VPS52, VPS53 and VPS54 subunits. Interacts with SNAP29. As to expression, ubiquitous. Highly expressed in brain, adipose tissue, spleen and kidney (at protein level).

The protein resides in the golgi apparatus. It is found in the trans-Golgi network. Its function is as follows. Acts as a component of endosomal retrieval machinery that is involved in protein transport from early endosomes to either recycling endosomes or the trans-Golgi network. Mediates the recruitment of Golgi-associated retrograde protein (GARP) complex to the trans-Golgi network and controls early endosome-to-Golgi transport of internalized protein. Promotes the recycling of internalized transferrin receptor (TFRC) to the plasma membrane through interaction with endosome-associated recycling protein (EARP) complex. Controls proper insulin distribution and secretion, and retention of cargo in mature dense core vesicles. Required for the stability of the endosome-associated retrograde protein (EARP) complex subunits and for proper localization and association of EARP with membranes. This is EARP and GARP complex-interacting protein 1 from Rattus norvegicus (Rat).